The primary structure comprises 410 residues: MFILLVLVTGVSAFTTPTVVHTGKVSESPITSEKPTVHGDNCQFRGREFKSELRLEGEPVVLRCPLAPHSDISSSSHSFLTWSKLDSSQLIPRDEPRMWVKGNILWILPAVQQDSGTYICTFRNASHCEQMSVELKVFKNTEASLPHVSYLQISALSTTGLLVCPDLKEFISSNADGKIQWYKGAILLDKGNKEFLSAGDPTRLLISNTSMDDAGYYRCVMTFTYNGQEYNITRNIELRVKGTTTEPIPVIISPLETIPASLGSRLIVPCKVFLGTGTSSNTIVWWLANSTFISAAYPRGRVTEGLHHQYSENDENYVEVSLIFDPVTREDLHTDFKCVASNPRSSQSLHTTVKEVSSTFSWSIALAPLSLIILVVGAIWMRRRCKRRAGKTYGLTKLRTDNQDFPSSPN.

A signal peptide spans 1 to 13 (MFILLVLVTGVSA). Over 14-355 (FTTPTVVHTG…SQSLHTTVKE (342 aa)) the chain is Extracellular. Ig-like C2-type domains are found at residues 35 to 136 (PTVH…VELK), 146 to 237 (PHVS…RNIE), and 249 to 357 (PVII…KEVS). 3 disulfide bridges follow: C42–C128, C64–C120, and C164–C219. N124, N208, N231, and N289 each carry an N-linked (GlcNAc...) asparagine glycan. A disulfide bond links C270 and C338. Residues 356–381 (VSSTFSWSIALAPLSLIILVVGAIWM) form a helical membrane-spanning segment. The Cytoplasmic portion of the chain corresponds to 382–410 (RRRCKRRAGKTYGLTKLRTDNQDFPSSPN).

This sequence belongs to the interleukin-1 receptor family. As to quaternary structure, associates with IL1RAP to form a non-signaling interleukin-1 receptor complex. Post-translationally, a soluble form (sIL1R2) can also be produced by proteolytic cleavage at the cell surface (shedding) involving a metalloproteinase. As to expression, strongly expressed in B-cells, with levels 21 times higher than IL1R1. In T-cells expressed 5 times more compared with IL1R1.

It localises to the membrane. Its subcellular location is the cell membrane. The protein localises to the secreted. Its function is as follows. Non-signaling receptor for IL1A, IL1B and IL1RN. Reduces IL1B activities. Serves as a decoy receptor by competitive binding to IL1B and preventing its binding to IL1R1. Also modulates cellular response through non-signaling association with IL1RAP after binding to IL1B. IL1R2 (membrane and secreted forms) preferentially binds IL1B and poorly IL1A and IL1RN. The secreted IL1R2 recruits secreted IL1RAP with high affinity; this complex formation may be the dominant mechanism for neutralization of IL1B by secreted/soluble receptors. This is Interleukin-1 receptor type 2 (Il1r2) from Mus musculus (Mouse).